The following is a 180-amino-acid chain: Large ribosomal subunit protein eL20 (180 aa).

The protein belongs to the eukaryotic ribosomal protein eL20 family.

The protein is Large ribosomal subunit protein eL20 of Caenorhabditis elegans.